A 529-amino-acid chain; its full sequence is MNHRYTLLALAAAALSAGAHATGTSVTAPWGEVAEPSLPADSAVCKTLSASITPIKGSVDSVDGNPANSQPDASRIQSAIDNCPAGQAVKLVKGSAGESGFLSGSLKLKSGVTLWIDTGVTLFASRNPADYDNGLGTCGTATTSNDKSCNALIVARDTAGSGIVGAGAIDGRGGSLVTSGPNANRLTWWDIAYLNKTKGLNQQNPRLIQTYNGSAFTLYGVTVQNSPNFHIVTTGTSGVTAWGIKIVTPSLAYAVAGYKCPSGSTPDKVTPATCFTPETVKNTDGFDPGQSTNVVLAYSYINTGDDHVAVKASSGPTRNLLFAHNHFYYGHGLSIGSETNTGVSNMLVTDLTMDGNDSSAGNGLRIKSDASRGGKVTNIVYDGICMRNVKEPLVFDPFYSSVKGSLYPNFTNIVVKNFHDLGSAKSIKRTMTFLGYKANKQKNPLTITLDNVVFDGTLPAFEGSHYGGPASPNGVHFTFGGTGPVSFADAIVTSSTTDVTVTGTPGTAAAVDCSKAFVPLKSVAPTSPI.

Positions 1–21 are cleaved as a signal peptide; the sequence is MNHRYTLLALAAAALSAGAHA. The active-site Proton donor is aspartate 305. Histidine 331 is an active-site residue. The interval 516 to 529 is required for PGA export across the outer membrane and catalytic activity; it reads AFVPLKSVAPTSPI.

Belongs to the glycosyl hydrolase 28 family. Monomer.

The protein resides in the secreted. The enzyme catalyses (1,4-alpha-D-galacturonosyl)n+m + H2O = (1,4-alpha-D-galacturonosyl)n + (1,4-alpha-D-galacturonosyl)m.. Functionally, contributes to the wilt disease production on tomato. The protein is Polygalacturonase (pglA) of Ralstonia solanacearum (Pseudomonas solanacearum).